The primary structure comprises 222 residues: CCA-adding enzyme (222 aa).

Residues serine 50 and lysine 53 each coordinate ATP. Positions 50 and 53 each coordinate CTP. Aspartate 61, aspartate 63, and aspartate 112 together coordinate Mg(2+). Residues histidine 135, lysine 155, and tyrosine 164 each coordinate ATP. 3 residues coordinate CTP: histidine 135, lysine 155, and tyrosine 164.

The protein belongs to the tRNA nucleotidyltransferase/poly(A) polymerase family. Archaeal CCA-adding enzyme subfamily. As to quaternary structure, homodimer. Requires Mg(2+) as cofactor.

The enzyme catalyses a tRNA precursor + 2 CTP + ATP = a tRNA with a 3' CCA end + 3 diphosphate. It catalyses the reaction a tRNA with a 3' CCA end + 2 CTP + ATP = a tRNA with a 3' CCACCA end + 3 diphosphate. Catalyzes the addition and repair of the essential 3'-terminal CCA sequence in tRNAs without using a nucleic acid template. Adds these three nucleotides in the order of C, C, and A to the tRNA nucleotide-73, using CTP and ATP as substrates and producing inorganic pyrophosphate. tRNA 3'-terminal CCA addition is required both for tRNA processing and repair. Also involved in tRNA surveillance by mediating tandem CCA addition to generate a CCACCA at the 3' terminus of unstable tRNAs. While stable tRNAs receive only 3'-terminal CCA, unstable tRNAs are marked with CCACCA and rapidly degraded. This chain is CCA-adding enzyme, found in Thermoplasma acidophilum.